A 152-amino-acid polypeptide reads, in one-letter code: Lipoprotein signal peptidase (152 aa).

The next 3 helical transmembrane spans lie at 5–25, 61–81, and 84–104; these read LFVL…FWIV, WFFV…LATH, and LNIW…GNFI. Residues aspartate 114 and aspartate 130 contribute to the active site. Residues 125–145 form a helical membrane-spanning segment; it reads IFNVADSYLTVGVILLVICLW.

The protein belongs to the peptidase A8 family.

Its subcellular location is the cell membrane. It catalyses the reaction Release of signal peptides from bacterial membrane prolipoproteins. Hydrolyzes -Xaa-Yaa-Zaa-|-(S,diacylglyceryl)Cys-, in which Xaa is hydrophobic (preferably Leu), and Yaa (Ala or Ser) and Zaa (Gly or Ala) have small, neutral side chains.. Its pathway is protein modification; lipoprotein biosynthesis (signal peptide cleavage). In terms of biological role, this protein specifically catalyzes the removal of signal peptides from prolipoproteins. This is Lipoprotein signal peptidase from Streptococcus pyogenes serotype M2 (strain MGAS10270).